Consider the following 755-residue polypeptide: Dynamin-1-like protein (755 aa).

Met-1 carries the post-translational modification N-acetylmethionine. In terms of domain architecture, Dynamin-type G spans Ile-22–Pro-315. Residues Gly-32–Ser-39 are G1 motif. Gly-32–Ser-40 provides a ligand contact to GTP. The interval Val-58 to Arg-60 is G2 motif. A G3 motif region spans residues Asp-159 to Gly-162. The interval Thr-228–Asp-231 is G4 motif. GTP is bound by residues Thr-228–Asp-234 and Asn-259–Gln-262. A G5 motif region spans residues Val-258–Ser-261. The interval Tyr-357–Ile-502 is middle domain. Positions Asn-461 to Glu-704 are interaction with GSK3B. The interval Ala-515 to Asn-582 is b domain. A disordered region spans residues Glu-536–Gly-610. Ser-542 is subject to Phosphoserine. Glycyl lysine isopeptide (Lys-Gly) (interchain with G-Cter in SUMO) cross-links involve residues Lys-545 and Lys-548. The segment covering Pro-550–Glu-567 has biased composition (low complexity). Residue Ser-561 is modified to Phosphoserine. Residues Ala-568 to Lys-581 are compositionally biased toward basic and acidic residues. Residues Lys-571 and Lys-581 each participate in a glycyl lysine isopeptide (Lys-Gly) (interchain with G-Cter in SUMO) cross-link. A compositionally biased stretch (gly residues) spans Ala-586–Gly-600. O-linked (GlcNAc) threonine glycans are attached at residues Thr-604 and Thr-605. Lys-613 participates in a covalent cross-link: Glycyl lysine isopeptide (Lys-Gly) (interchain with G-Cter in SUMO). The residue at position 616 (Lys-616) is an N6-acetyllysine; alternate. Residue Lys-616 forms a Glycyl lysine isopeptide (Lys-Gly) (interchain with G-Cter in SUMO); alternate linkage. Lys-625 is covalently cross-linked (Glycyl lysine isopeptide (Lys-Gly) (interchain with G-Cter in SUMO)). Phosphoserine is present on Ser-626. Lys-627 participates in a covalent cross-link: Glycyl lysine isopeptide (Lys-Gly) (interchain with G-Cter in SUMO). Ser-635 is modified (phosphoserine; by CDK1). Phosphoserine; by CAMK1 and PKA is present on Ser-656. Position 663 is an S-nitrosocysteine (Cys-663). In terms of domain architecture, GED spans Cys-663 to Leu-754. Residues Tyr-673 to Lys-687 are important for homodimerization.

This sequence belongs to the TRAFAC class dynamin-like GTPase superfamily. Dynamin/Fzo/YdjA family. As to quaternary structure, homotetramer; dimerizes through the N-terminal GTP-middle region of one molecule binding to the GED domain of another DNM1L molecule. Oligomerizes in a GTP-dependent manner to form membrane-associated tubules with a spiral pattern. Interacts with GSK3B and MARCHF5. Interacts (via the GTPase and B domains) with UBE2I; the interaction promotes sumoylation of DNM1L, mainly in its B domain. Interacts with PPP3CA; the interaction dephosphorylates DNM1L and regulates its transition to mitochondria. Interacts with BCL2L1 isoform BCL-X(L) and CLTA; DNM1L and BCL2L1 isoform BCL-X(L) may form a complex in synaptic vesicles that also contains clathrin and MFF. Interacts with MFF; the interaction is inhinited by C11orf65/MFI. Interacts with FIS1. Interacts with MIEF2 and MIEF1; GTP-dependent this regulates GTP hydrolysis and DNM1L oligomerization. Interacts with PGAM5; this interaction leads to dephosphorylation at Ser-656 and activation of GTPase activity and eventually to mitochondria fragmentation. Interacts with RALBP1; during mitosis, recruits DNM1L to the mitochondrion and mediates its activation by the mitotic kinase cyclin B-CDK1. Interacts with FUNDC1; this interaction recruits DNM1L/DRP1 at ER-mitochondria contact sites. Post-translationally, phosphorylation/dephosphorylation events on two sites near the GED domain regulate mitochondrial fission. Phosphorylation on Ser-656 by CAMK1 and PKA inhibits the GTPase activity, leading to a defect in mitochondrial fission promoting mitochondrial elongation. Dephosphorylated on this site by PPP3CA which promotes mitochondrial fission. Phosphorylation on Ser-635 by PINK1 activates the GTPase activity and promotes mitochondrial fission. Phosphorylation on Ser-635 by CDK1 also promotes mitochondrial fission. Phosphorylated in a circadian manner at Ser-656. Dephosphorylated by PGAM5. In terms of processing, sumoylated on various lysine residues within the B domain, probably by MUL1. Sumoylation positively regulates mitochondrial fission. Desumoylated by SENP5 during G2/M transition of mitosis. Appears to be linked to its catalytic activity. S-nitrosylation increases DNM1L dimerization, mitochondrial fission and causes neuronal damage. Post-translationally, O-GlcNAcylation augments the level of the GTP-bound active form of DNM1L and induces translocation from the cytoplasm to mitochondria in cardiomyocytes. It also decreases phosphorylation at Ser-656. In terms of processing, ubiquitination by MARCHF5 affects mitochondrial morphology. In terms of tissue distribution, expressed in all tissues tested (at protein level). Longer isoforms are preferentially expressed in brain.

The protein resides in the cytoplasm. Its subcellular location is the cytosol. The protein localises to the golgi apparatus. It localises to the endomembrane system. It is found in the mitochondrion outer membrane. The protein resides in the peroxisome. Its subcellular location is the membrane. The protein localises to the clathrin-coated pit. It localises to the cytoplasmic vesicle. It is found in the secretory vesicle. The protein resides in the synaptic vesicle membrane. It catalyses the reaction GTP + H2O = GDP + phosphate + H(+). Functionally, functions in mitochondrial and peroxisomal division. Mediates membrane fission through oligomerization into membrane-associated tubular structures that wrap around the scission site to constrict and sever the mitochondrial membrane through a GTP hydrolysis-dependent mechanism. The specific recruitment at scission sites is mediated by membrane receptors like MFF, MIEF1 and MIEF2 for mitochondrial membranes. While the recruitment by the membrane receptors is GTP-dependent, the following hydrolysis of GTP induces the dissociation from the receptors and allows DNM1L filaments to curl into closed rings that are probably sufficient to sever a double membrane. Acts downstream of PINK1 to promote mitochondrial fission in a PRKN-dependent manner. Plays an important role in mitochondrial fission during mitosis. Through its function in mitochondrial division, ensures the survival of at least some types of postmitotic neurons, including Purkinje cells, by suppressing oxidative damage. Required for normal brain development, including that of cerebellum. Facilitates developmentally regulated apoptosis during neural tube formation. Required for a normal rate of cytochrome c release and caspase activation during apoptosis; this requirement may depend upon the cell type and the physiological apoptotic cues. Required for formation of endocytic vesicles. Proposed to regulate synaptic vesicle membrane dynamics through association with BCL2L1 isoform Bcl-X(L) which stimulates its GTPase activity in synaptic vesicles; the function may require its recruitment by MFF to clathrin-containing vesicles. Required for programmed necrosis execution. Rhythmic control of its activity following phosphorylation at Ser-656 is essential for the circadian control of mitochondrial ATP production. The sequence is that of Dynamin-1-like protein from Rattus norvegicus (Rat).